The chain runs to 753 residues: Photosystem I P700 chlorophyll a apoprotein A1 (753 aa).

A run of 8 helical transmembrane segments spans residues 72–95 (IFSAHFGHLAIIFVWLSGAYFHGA), 158–181 (LYCTAIGGLVMAALMMFAGWFHYH), 197–221 (MNHHLAGLLGLGCLSWAGHQIHVSL), 293–311 (TAHHHLALAVLFIVAGHMY), 350–373 (WHAQLAINLAMLGSLSIIVAHHMY), 389–415 (LSLFTHHMWIGGFLIVGAGAHGAIFMV), 437–459 (AIISHLNWVCIFLGFHSFGLYVH), and 534–552 (FMVHHIHAFTIHVTALILL). [4Fe-4S] cluster-binding residues include Cys-576 and Cys-585. The next 2 helical transmembrane spans lie at 592–613 (HVFLGLFWMYNSLSIVIFHFSW) and 667–689 (LSAYGLLFLGAHFIWAFSLMFLF). His-678 contacts chlorophyll a'. Residues Met-686 and Tyr-694 each contribute to the chlorophyll a site. A phylloquinone-binding site is contributed by Trp-695. The chain crosses the membrane as a helical span at residues 727–747 (AVGVAHYLLGGIVTTWAFFLA).

It belongs to the PsaA/PsaB family. The PsaA/B heterodimer binds the P700 chlorophyll special pair and subsequent electron acceptors. PSI consists of a core antenna complex that captures photons, and an electron transfer chain that converts photonic excitation into a charge separation. The cyanobacterial PSI reaction center is composed of one copy each of PsaA,B,C,D,E,F,I,J,K,L,M and X, and forms trimeric complexes. PSI electron transfer chain: 5 chlorophyll a, 1 chlorophyll a', 2 phylloquinones and 3 4Fe-4S clusters. PSI core antenna: 90 chlorophyll a, 22 carotenoids, 3 phospholipids and 1 galactolipid. P700 is a chlorophyll a/chlorophyll a' dimer, A0 is one or more chlorophyll a, A1 is one or both phylloquinones and FX is a shared 4Fe-4S iron-sulfur center. serves as cofactor.

The protein resides in the cellular thylakoid membrane. It catalyses the reaction reduced [plastocyanin] + hnu + oxidized [2Fe-2S]-[ferredoxin] = oxidized [plastocyanin] + reduced [2Fe-2S]-[ferredoxin]. In terms of biological role, psaA and PsaB bind P700, the primary electron donor of photosystem I (PSI), as well as the electron acceptors A0, A1 and FX. PSI is a plastocyanin/cytochrome c6-ferredoxin oxidoreductase, converting photonic excitation into a charge separation, which transfers an electron from the donor P700 chlorophyll pair to the spectroscopically characterized acceptors A0, A1, FX, FA and FB in turn. Oxidized P700 is reduced on the lumenal side of the thylakoid membrane by plastocyanin or cytochrome c6. This is Photosystem I P700 chlorophyll a apoprotein A1 from Trichodesmium erythraeum (strain IMS101).